Consider the following 168-residue polypeptide: CDP-archaeol synthase (168 aa).

5 helical membrane-spanning segments follow: residues 4–24 (IFEA…PVVL), 51–71 (GFFG…LMFP), 81–101 (VGVA…GSFI), 112–132 (PAVG…AYPL), and 138–158 (GEVL…NVFA).

The protein belongs to the CDP-archaeol synthase family. Mg(2+) serves as cofactor.

It is found in the cell membrane. The enzyme catalyses 2,3-bis-O-(geranylgeranyl)-sn-glycerol 1-phosphate + CTP + H(+) = CDP-2,3-bis-O-(geranylgeranyl)-sn-glycerol + diphosphate. It participates in membrane lipid metabolism; glycerophospholipid metabolism. Catalyzes the formation of CDP-2,3-bis-(O-geranylgeranyl)-sn-glycerol (CDP-archaeol) from 2,3-bis-(O-geranylgeranyl)-sn-glycerol 1-phosphate (DGGGP) and CTP. This reaction is the third ether-bond-formation step in the biosynthesis of archaeal membrane lipids. The polypeptide is CDP-archaeol synthase (Pyrococcus abyssi (strain GE5 / Orsay)).